Here is a 510-residue protein sequence, read N- to C-terminus: MFIESFRVESPKVRYGAGEIESEYRYDTTELVHESHDGASKWVVRPKSVNYHFKTNTTVPKLGVMLVGWGGNNGSTLMAGVIANREGISWATKDKVQQANYFGSLTQASTIRVGSYNGEEIYAPFKSLLPMVNPDDLVFGGWDISSMNLADAMTRAKVLDIDLQKQLRPYMESMCPLPGIYDPDFIAANQGSRANNVIKGTKKEQMEQVIKDIREFKEKNKVDKVVVLWTANTERYSNVSVGLNDTTENLLASVDKNEAEISPSTLYAIACVMEGVPFINGSPQNTFVPGLIDLAIKNDCLIGGDDFKSGQTKMKSVLVDFLVGAGIKPTSIVSYNHLGNNDGMNLSAPQTFRSKEISKSNVVDDMVSSNAILYEPGEHPDHVVVIKYVPYVGDSKRAMDEYTSEIFMGGKSTIVLHNTCEDSLLRAPIILDLVLLAELSTRIQLKAEGEDKLHSFHPVATILSYLTKAPLVPPGTPVVNALAKQRAMLENIMRACVGLAPENNMILEYK.

Residues glycine 70, glycine 71, asparagine 72, asparagine 73, aspartate 143, isoleucine 180, glutamine 190, arginine 193, threonine 230, alanine 231, asparagine 232, threonine 233, glycine 281, serine 282, aspartate 306, serine 309, asparagine 340, asparagine 341, aspartate 342, lysine 355, glycine 393, aspartate 394, aspartate 422, and serine 423 each contribute to the NAD(+) site.

This sequence belongs to the myo-inositol 1-phosphate synthase family. NAD(+) serves as cofactor.

It localises to the cytoplasm. Its subcellular location is the cytosol. It is found in the nucleus. The catalysed reaction is D-glucose 6-phosphate = 1D-myo-inositol 3-phosphate. The protein operates within polyol metabolism; myo-inositol biosynthesis; myo-inositol from D-glucose 6-phosphate: step 1/2. Its function is as follows. Key enzyme in myo-inositol biosynthesis pathway that catalyzes the conversion of glucose 6-phosphate to 1-myo-inositol 1-phosphate in a NAD-dependent manner. In Hordeum vulgare (Barley), this protein is Inositol-3-phosphate synthase.